Reading from the N-terminus, the 463-residue chain is Chromosomal replication initiator protein DnaA (463 aa).

The segment at 1 to 83 (MSTNQIILTD…LQLFQHYNNT (83 aa)) is domain I, interacts with DnaA modulators. A domain II region spans residues 83-124 (TIKSIEIITKELPGTTQTVIELPTKTFADIGSSELNSENIFS). The domain III, AAA+ region stretch occupies residues 125–343 (TLDVRFTFDN…GALNKVIAHS (219 aa)). Residues glycine 171, glycine 173, lysine 174, and threonine 175 each coordinate ATP. The interval 344 to 463 (NFTLKEITLE…INLLMKILQN (120 aa)) is domain IV, binds dsDNA.

It belongs to the DnaA family. As to quaternary structure, oligomerizes as a right-handed, spiral filament on DNA at oriC.

It localises to the cytoplasm. Functionally, plays an essential role in the initiation and regulation of chromosomal replication. ATP-DnaA binds to the origin of replication (oriC) to initiate formation of the DNA replication initiation complex once per cell cycle. Binds the DnaA box (a 9 base pair repeat at the origin) and separates the double-stranded (ds)DNA. Forms a right-handed helical filament on oriC DNA; dsDNA binds to the exterior of the filament while single-stranded (ss)DNA is stabiized in the filament's interior. The ATP-DnaA-oriC complex binds and stabilizes one strand of the AT-rich DNA unwinding element (DUE), permitting loading of DNA polymerase. After initiation quickly degrades to an ADP-DnaA complex that is not apt for DNA replication. Binds acidic phospholipids. The protein is Chromosomal replication initiator protein DnaA of Rickettsia felis (strain ATCC VR-1525 / URRWXCal2) (Rickettsia azadi).